Here is a 249-residue protein sequence, read N- to C-terminus: Acidic leucine-rich nuclear phosphoprotein 32 family member A (249 aa).

Phosphothreonine is present on Thr-15. Ser-17 carries the post-translational modification Phosphoserine. 4 LRR repeats span residues 18 to 41 (DVKELVLDNCRSIEGKIEGLTDEF), 43 to 64 (ELEFLSTINVGLTSVANLPKLN), 65 to 87 (KLKKLELSDNRISGGLEVLAEKC), and 89 to 110 (NLTHLNLSGNKIKDLSTIEPLK). Residues 123–161 (CEVTNLNDYRENVFKLLPQLTYLDGYDRDDKEAPDSDAE) enclose the LRRCT domain. Over residues 147-156 (GYDRDDKEAP) the composition is skewed to basic and acidic residues. Residues 147–249 (GYDRDDKEAP…EPXDXGEDDD (103 aa)) are disordered. Positions 150-174 (RDDKEAPDSDAEGYVEGLDDDEEDE) are necessary for tumor-suppressive function. A compositionally biased stretch (acidic residues) spans 157–230 (DSDAEGYVEG…DEEDEEDVGE (74 aa)). Residues Ser-158 and Ser-204 each carry the phosphoserine modification. The interaction with E4F1 stretch occupies residues 165-249 (EGLDDDEEDE…EPXDXGEDDD (85 aa)).

It belongs to the ANP32 family. As to quaternary structure, component of the SET complex, composed of at least ANP32A, APEX1, HMGB2, NME1, SET and TREX1. Directly interacts with SET. Interacts with ATXN1/SCA1. Interacts with MAP1B. Interacts with ELAVL1. Part of the INHAT (inhibitor of histone acetyltransferases) complex. Interacts with E4F1. In terms of processing, phosphorylated on serine residues, at least in part by casein kinase 2/CK2. Some glutamate residues are glycylated by TTLL8. This modification occurs exclusively on glutamate residues and results in a glycine chain on the gamma-carboxyl group.

Its subcellular location is the nucleus. It localises to the cytoplasm. The protein localises to the endoplasmic reticulum. Multifunctional protein that is involved in the regulation of many processes including tumor suppression, apoptosis, cell cycle progression or transcription. Promotes apoptosis by favouring the activation of caspase-9/CASP9 and allowing apoptosome formation. In addition, plays a role in the modulation of histone acetylation and transcription as part of the INHAT (inhibitor of histone acetyltransferases) complex. Inhibits the histone-acetyltranferase activity of EP300/CREBBP (CREB-binding protein) and EP300/CREBBP-associated factor by histone masking. Preferentially binds to unmodified histone H3 and sterically inhibiting its acetylation and phosphorylation leading to cell growth inhibition. Participates in other biochemical processes such as regulation of mRNA nuclear-to-cytoplasmic translocation and stability by its association with ELAVL1 (Hu-antigen R). Plays a role in E4F1-mediated transcriptional repression as well as inhibition of protein phosphatase 2A. In Canis lupus familiaris (Dog), this protein is Acidic leucine-rich nuclear phosphoprotein 32 family member A (ANP32A).